The sequence spans 95 residues: Small ribosomal subunit protein bS18 (95 aa).

The protein belongs to the bacterial ribosomal protein bS18 family. Part of the 30S ribosomal subunit. Forms a tight heterodimer with protein bS6.

Functionally, binds as a heterodimer with protein bS6 to the central domain of the 16S rRNA, where it helps stabilize the platform of the 30S subunit. This is Small ribosomal subunit protein bS18 from Ehrlichia ruminantium (strain Gardel).